Reading from the N-terminus, the 270-residue chain is Cystinosin homolog (270 aa).

In terms of domain architecture, PQ-loop 1 spans 9–75; sequence LEISYEIVGW…LYFSPVIQKQ (67 aa). A helical membrane pass occupies residues 14 to 34; sequence EIVGWIAFASWSISFYPQLIL. An N-linked (GlcNAc...) asparagine glycan is attached at asparagine 52. Transmembrane regions (helical) follow at residues 93–113, 123–143, and 148–168; these read VAFS…IFIY, LAIG…FIAL, and WLWL…VKYI. A PQ-loop 2 domain is found at 151–213; sequence LISIFNSIQV…IQSIDQNSWK (63 aa). Asparagine 174 carries N-linked (GlcNAc...) asparagine glycosylation. 2 consecutive transmembrane segments (helical) span residues 180-200 and 223-243; these read TVGW…ANYL and LLSL…YVLY. The segment at 250–270 is disordered; the sequence is KSPETGEESNEPLIDSSHEHV.

Belongs to the cystinosin (TC 2.A.43.1) family.

The protein resides in the lysosome membrane. Its function is as follows. Thought to transport cystine out of lysosomes. This Arabidopsis thaliana (Mouse-ear cress) protein is Cystinosin homolog.